The primary structure comprises 190 residues: Crossover junction endodeoxyribonuclease RuvC (190 aa).

Active-site residues include aspartate 8, glutamate 67, and aspartate 139. Residues aspartate 8, glutamate 67, and aspartate 139 each contribute to the Mg(2+) site.

The protein belongs to the RuvC family. As to quaternary structure, homodimer which binds Holliday junction (HJ) DNA. The HJ becomes 2-fold symmetrical on binding to RuvC with unstacked arms; it has a different conformation from HJ DNA in complex with RuvA. In the full resolvosome a probable DNA-RuvA(4)-RuvB(12)-RuvC(2) complex forms which resolves the HJ. It depends on Mg(2+) as a cofactor.

It is found in the cytoplasm. It catalyses the reaction Endonucleolytic cleavage at a junction such as a reciprocal single-stranded crossover between two homologous DNA duplexes (Holliday junction).. Its function is as follows. The RuvA-RuvB-RuvC complex processes Holliday junction (HJ) DNA during genetic recombination and DNA repair. Endonuclease that resolves HJ intermediates. Cleaves cruciform DNA by making single-stranded nicks across the HJ at symmetrical positions within the homologous arms, yielding a 5'-phosphate and a 3'-hydroxyl group; requires a central core of homology in the junction. The consensus cleavage sequence is 5'-(A/T)TT(C/G)-3'. Cleavage occurs on the 3'-side of the TT dinucleotide at the point of strand exchange. HJ branch migration catalyzed by RuvA-RuvB allows RuvC to scan DNA until it finds its consensus sequence, where it cleaves and resolves the cruciform DNA. This chain is Crossover junction endodeoxyribonuclease RuvC, found in Haemophilus influenzae (strain PittGG).